The chain runs to 198 residues: Chorion protein S19 (198 aa).

The N-terminal stretch at 1 to 16 is a signal peptide; the sequence is MNKFATLAVFISVCLA.

The protein belongs to the chorion protein S19 family.

The protein localises to the secreted. Its function is as follows. Chorion membrane (egg shell) protein; plays a role in protecting the egg from the environment. This is Chorion protein S19 (Cp19) from Drosophila virilis (Fruit fly).